The sequence spans 274 residues: 3-methyl-2-oxobutanoate hydroxymethyltransferase (274 aa).

Positions 44 and 83 each coordinate Mg(2+). Residues Asp44 to Ser45, Asp83, and Lys113 each bind 3-methyl-2-oxobutanoate. Glu115 lines the Mg(2+) pocket. Glu182 serves as the catalytic Proton acceptor.

The protein belongs to the PanB family. As to quaternary structure, homodecamer; pentamer of dimers. Mg(2+) is required as a cofactor.

It localises to the cytoplasm. It carries out the reaction 3-methyl-2-oxobutanoate + (6R)-5,10-methylene-5,6,7,8-tetrahydrofolate + H2O = 2-dehydropantoate + (6S)-5,6,7,8-tetrahydrofolate. The protein operates within cofactor biosynthesis; (R)-pantothenate biosynthesis; (R)-pantoate from 3-methyl-2-oxobutanoate: step 1/2. Catalyzes the reversible reaction in which hydroxymethyl group from 5,10-methylenetetrahydrofolate is transferred onto alpha-ketoisovalerate to form ketopantoate. The chain is 3-methyl-2-oxobutanoate hydroxymethyltransferase from Campylobacter jejuni (strain RM1221).